The following is a 301-amino-acid chain: Probable 5-dehydro-4-deoxyglucarate dehydratase (301 aa).

The protein belongs to the DapA family.

It carries out the reaction 5-dehydro-4-deoxy-D-glucarate + H(+) = 2,5-dioxopentanoate + CO2 + H2O. The protein operates within carbohydrate acid metabolism; D-glucarate degradation; 2,5-dioxopentanoate from D-glucarate: step 2/2. The protein is Probable 5-dehydro-4-deoxyglucarate dehydratase of Cereibacter sphaeroides (strain KD131 / KCTC 12085) (Rhodobacter sphaeroides).